The primary structure comprises 132 residues: Small ribosomal subunit protein eS24 (132 aa).

The segment covering 90-100 (RLARHGLFEKK) has biased composition (basic and acidic residues). Residues 90 to 132 (RLARHGLFEKKKTSRKQRKERKNRMKKVRGTKKASVGASKKKD) form a disordered region. Over residues 101–121 (KTSRKQRKERKNRMKKVRGTK) the composition is skewed to basic residues.

This sequence belongs to the eukaryotic ribosomal protein eS24 family. Component of the small ribosomal subunit.

The protein resides in the cytoplasm. In terms of biological role, component of the small ribosomal subunit. The ribosome is a large ribonucleoprotein complex responsible for the synthesis of proteins in the cell. Required for processing of pre-rRNA and maturation of 40S ribosomal subunits. The chain is Small ribosomal subunit protein eS24 (rps24) from Takifugu rubripes (Japanese pufferfish).